The chain runs to 542 residues: Protein OS-9 homolog (542 aa).

Positions 1 to 21 (MQAKIIYALSAISALIPLGSS) are cleaved as a signal peptide. Asn52 and Asn74 each carry an N-linked (GlcNAc...) asparagine glycan. Cystine bridges form between Cys70/Cys258, Cys117/Cys130, Cys193/Cys227, and Cys208/Cys239. The 127-residue stretch at 115–241 (ERCIFYQAGF…QVTIPELCNL (127 aa)) folds into the MRH domain. The a mannooligosaccharide derivative site is built by Trp125, Gln137, Asp194, Arg200, Glu223, and Tyr229. Residue Asn380 is glycosylated (N-linked (GlcNAc...) asparagine). The interval 497–528 (NARMDDDESTSHTTRDIGEAGSQTTGNTESEV) is disordered. The span at 505 to 514 (STSHTTRDIG) shows a compositional bias: basic and acidic residues. A compositionally biased stretch (polar residues) spans 517 to 528 (GSQTTGNTESEV). The Prevents secretion from ER signature appears at 539 to 542 (HDEL).

The protein belongs to the OS-9 family. Homodimer. Component of the HRD1 ubiquitin ligase complex which contains the E3 ligase HRD1, its cofactors HRD3, USA1 and DER1, substrate recruiting factor YOS9 and CDC48-binding protein UBX2. Within the complex, interacts (via N-terminus) with HRD3. In ERAD-L, HRD3 and YOS9 jointly bind misfolded glycoproteins in the endoplasmic reticulum (ER) lumen. Movement of ERAD-L substrates through the ER membrane is facilitated by HRD1 and DER1 which have lateral gates facing each other and which distort the membrane region between the lateral gates, making it much thinner than a normal phospholipid bilayer. Substrates insert into the membrane as a hairpin loop with one strand interacting with DER1 and the other with HRD1. The HRD1 complex interacts with the heterotrimeric CDC48-NPL4-UFD1 ATPase complex which is recruited by UBX2 via its interaction with CDC48 and which moves ubiquitinated substrates to the cytosol for targeting to the proteasome. Interacts with KAR2 and EMP47. Interacts with misfolded ER lumenal proteins like PCR1. Interacts with the GPI-anchored proteins GAS1 and MKC7.

The protein resides in the endoplasmic reticulum membrane. Its function is as follows. Lectin involved in the quality control of the secretory pathway. As a member of the endoplasmic reticulum-associated degradation lumenal (ERAD-L) surveillance system, targets misfolded endoplasmic reticulum lumenal glycoproteins for degradation. The recognition of targets is N-glycan specific. Functions in recruiting misfolded protein substrates in conjunction with HRD3. The protein is Protein OS-9 homolog (YOS9) of Saccharomyces cerevisiae (strain ATCC 204508 / S288c) (Baker's yeast).